The following is a 1291-amino-acid chain: Vacuolating cytotoxin autotransporter (1291 aa).

Positions 1–33 (MEIQQTHRKINRPLVSLALVGALVSITPQQSHA) are cleaved as a signal peptide. Positions 326–374 (PPEGGYKDKPNDKPSNTTQNNAKNDKQESSQNNSNTQVINPPNSAQKTE) are disordered. Composition is skewed to polar residues over residues 338–347 (KPSNTTQNNA) and 354–374 (SSQN…QKTE). One can recognise an Autotransporter domain in the interval 1018 to 1291 (KYEKPTNVWA…ASNLGMRYSF (274 aa)).

The protein localises to the periplasm. The protein resides in the secreted. It localises to the cell surface. It is found in the cell outer membrane. Its function is as follows. Induces vacuolation of eukaryotic cells. Causes ulceration and gastric lesions. The sequence is that of Vacuolating cytotoxin autotransporter (vacA) from Helicobacter pylori (Campylobacter pylori).